Reading from the N-terminus, the 168-residue chain is Ribosome maturation factor RimM (168 aa).

Positions 96–168 (EGDYYWTDLI…IIVVEWDADF (73 aa)) constitute a PRC barrel domain.

This sequence belongs to the RimM family. Binds ribosomal protein uS19.

It is found in the cytoplasm. In terms of biological role, an accessory protein needed during the final step in the assembly of 30S ribosomal subunit, possibly for assembly of the head region. Essential for efficient processing of 16S rRNA. May be needed both before and after RbfA during the maturation of 16S rRNA. It has affinity for free ribosomal 30S subunits but not for 70S ribosomes. This Coxiella burnetii (strain RSA 331 / Henzerling II) protein is Ribosome maturation factor RimM.